A 373-amino-acid chain; its full sequence is Alginate lyase (373 aa).

Residues 1-25 (MRLPMQKLLIPTLLGLAMFAGSVNA) form the signal peptide. Substrate is bound by residues 66–67 (SK), 139–140 (HT), and Tyr257.

Belongs to the polysaccharide lyase 5 family.

The protein resides in the periplasm. It catalyses the reaction Eliminative cleavage of alginate to give oligosaccharides with 4-deoxy-alpha-L-erythro-hex-4-enuronosyl groups at their non-reducing ends and beta-D-mannuronate at their reducing end.. Functionally, catalyzes the depolymerization of alginate by cleaving the beta-1,4 glycosidic bond between two adjacent sugar residues via a beta-elimination mechanism. May serve to degrade mislocalized alginate that is trapped in the periplasmic space. This is Alginate lyase from Pseudomonas fluorescens.